Here is a 375-residue protein sequence, read N- to C-terminus: Venom allergen 5 (375 aa).

The first 26 residues, 1–26 (MSAPVGIPSLLLALCALLCVLNAVRS), serve as a signal peptide directing secretion. An SCP domain is found at 66-210 (VRLHNNLRSK…RRYTQIVCNY (145 aa)). Residues asparagine 300 and asparagine 366 are each glycosylated (N-linked (GlcNAc...) asparagine).

This sequence belongs to the CRISP family. Venom allergen 5-like subfamily. Post-translationally, contains 9 disulfide bonds. In terms of tissue distribution, expressed by the venom gland.

The protein localises to the secreted. In Lycosa singoriensis (Wolf spider), this protein is Venom allergen 5.